The chain runs to 437 residues: Rhoptry apical surface protein 2 (437 aa).

Residues 45 to 179 enclose the C2 domain; sequence GCLGSLFFYL…PRINLSLHKL (135 aa). The PH domain maps to 230-338; the sequence is EGPLERLNAN…FIEKLRAYRE (109 aa). The tract at residues 341–437 is disordered; sequence STRVPSQKGA…SVVGDEEPQT (97 aa). Over residues 375-384 the composition is skewed to basic residues; it reads RKSGGKKSRR.

As to quaternary structure, interacts with RASP1. Interacts with RASP3.

The protein resides in the cytoplasmic vesicle. Its subcellular location is the secretory vesicle. It is found in the rhoptry membrane. Essential for tachyzoite invasion of host cells by controlling rhoptry secretion. Binds to phosphatidic acid (PA) and phosphatidylinositol 4,5-bisphosphate (PIP2) lipids and thus, likely contributes to the assembly of the machinery that docks or primes the rhoptry to the parasite cell membrane prior to the fusion with the host cell membrane. The polypeptide is Rhoptry apical surface protein 2 (Toxoplasma gondii (strain ATCC 50853 / GT1)).